Here is a 209-residue protein sequence, read N- to C-terminus: rRNA N(6)-adenosine-methyltransferase METTL5 (209 aa).

Residues Gln28, Thr31, Gly59, Cys62, Val64, Asp81, and 108-109 (DV) each bind S-adenosyl-L-methionine.

Belongs to the methyltransferase superfamily. PrmA family. As to quaternary structure, heterodimer; heterodimerizes with TRMT112. In terms of tissue distribution, ubiquitously expressed in brain.

Its subcellular location is the nucleus. It is found in the presynapse. The protein localises to the postsynapse. It carries out the reaction adenosine(1832) in 18S rRNA + S-adenosyl-L-methionine = N(6)-methyladenosine(1832) in 18S rRNA + S-adenosyl-L-homocysteine + H(+). Its activity is regulated as follows. rRNA N6-adenosine-methyltransferase activity is inhibited by zinc. In terms of biological role, catalytic subunit of a heterodimer with TRMT112, which specifically methylates the 6th position of adenine in position 1832 of 18S rRNA. N6-methylation of adenine(1832) in 18S rRNA resides in the decoding center of 18S rRNA and is required for translation and embryonic stem cells (ESCs) pluripotency and differentiation. The chain is rRNA N(6)-adenosine-methyltransferase METTL5 from Mus musculus (Mouse).